The following is a 325-amino-acid chain: Thiamine-monophosphate kinase (325 aa).

4 residues coordinate Mg(2+): aspartate 30, serine 45, threonine 46, and aspartate 47. Histidine 54 contacts substrate. Mg(2+) is bound by residues aspartate 75 and aspartate 122. Residues 121–122 (GD) and arginine 146 each bind ATP. Aspartate 212 is a Mg(2+) binding site. Residue serine 214 participates in ATP binding. Aspartate 215 is a Mg(2+) binding site. Glutamate 263 and tyrosine 319 together coordinate substrate.

The protein belongs to the thiamine-monophosphate kinase family.

The enzyme catalyses thiamine phosphate + ATP = thiamine diphosphate + ADP. It participates in cofactor biosynthesis; thiamine diphosphate biosynthesis; thiamine diphosphate from thiamine phosphate: step 1/1. Is markedly activated by the monovalent cations K(+), NH(4)(+), and Rb(+). Is significantly inhibited by ADP, AMP, p-chloromercuribenzoate, N-ethylmaleimide, pyrophosphate, and EDTA. Its function is as follows. Catalyzes the ATP-dependent phosphorylation of thiamine-monophosphate (TMP) to form thiamine-pyrophosphate (TPP), the active form of vitamin B1. Cannot use thiamine as substrate. Is highly specific for ATP as phosphate donor. The sequence is that of Thiamine-monophosphate kinase (thiL) from Escherichia coli (strain K12).